Consider the following 148-residue polypeptide: Transcriptional regulator MraZ (148 aa).

SpoVT-AbrB domains follow at residues 5–53 (ETAI…AESE) and 82–125 (AAHL…SEQA).

Belongs to the MraZ family. In terms of assembly, forms oligomers.

It localises to the cytoplasm. The protein localises to the nucleoid. The chain is Transcriptional regulator MraZ from Stenotrophomonas maltophilia (strain R551-3).